Reading from the N-terminus, the 138-residue chain is Large ribosomal subunit protein bL17 (138 aa).

It belongs to the bacterial ribosomal protein bL17 family. Part of the 50S ribosomal subunit. Contacts protein L32.

This Buchnera aphidicola subsp. Schizaphis graminum (strain Sg) protein is Large ribosomal subunit protein bL17.